We begin with the raw amino-acid sequence, 48 residues long: ATP synthase protein 8 (48 aa).

Residues 13 to 32 form a helical membrane-spanning segment; the sequence is LTYGFLLMITLLILFSQFFL.

It belongs to the ATPase protein 8 family. F-type ATPases have 2 components, CF(1) - the catalytic core - and CF(0) - the membrane proton channel. In yeast, the dimeric form of ATP synthase consists of 17 polypeptides: alpha, beta, gamma, delta, epsilon, 4 (B), 5 (OSCP), 6 (A), 8, 9 (C), d, E (Tim11), f, g, h, i/j and k.

It localises to the mitochondrion membrane. Mitochondrial membrane ATP synthase (F(1)F(0) ATP synthase or Complex V) produces ATP from ADP in the presence of a proton gradient across the membrane which is generated by electron transport complexes of the respiratory chain. F-type ATPases consist of two structural domains, F(1) - containing the extramembraneous catalytic core and F(0) - containing the membrane proton channel, linked together by a central stalk and a peripheral stalk. During catalysis, ATP synthesis in the catalytic domain of F(1) is coupled via a rotary mechanism of the central stalk subunits to proton translocation. Part of the complex F(0) domain. Minor subunit located with subunit a in the membrane. This chain is ATP synthase protein 8 (ATP8), found in Saccharomyces cerevisiae (strain ATCC 204508 / S288c) (Baker's yeast).